Consider the following 308-residue polypeptide: L-lactate dehydrogenase 2 (308 aa).

Residues valine 14, aspartate 35, tyrosine 65, and 79 to 80 each bind NAD(+); that span reads GA. Arginine 88 serves as a coordination point for substrate. Serine 101 is an NAD(+) binding site. Position 120 to 123 (120 to 123) interacts with substrate; it reads NPVD. Position 143 (threonine 143) interacts with NAD(+). 148–151 serves as a coordination point for substrate; that stretch reads DTAR. Residue histidine 175 is the Proton acceptor of the active site. A substrate-binding site is contributed by threonine 225.

The protein belongs to the LDH/MDH superfamily. LDH family. Homotetramer.

It localises to the cytoplasm. The catalysed reaction is (S)-lactate + NAD(+) = pyruvate + NADH + H(+). The protein operates within fermentation; pyruvate fermentation to lactate; (S)-lactate from pyruvate: step 1/1. Functionally, catalyzes the conversion of lactate to pyruvate. The protein is L-lactate dehydrogenase 2 of Lactobacillus johnsonii (strain CNCM I-12250 / La1 / NCC 533).